The following is a 245-amino-acid chain: 1-(5-phosphoribosyl)-5-[(5-phosphoribosylamino)methylideneamino] imidazole-4-carboxamide isomerase (245 aa).

Asp-11 (proton acceptor) is an active-site residue. Residue Asp-132 is the Proton donor of the active site.

The protein belongs to the HisA/HisF family.

Its subcellular location is the cytoplasm. It carries out the reaction 1-(5-phospho-beta-D-ribosyl)-5-[(5-phospho-beta-D-ribosylamino)methylideneamino]imidazole-4-carboxamide = 5-[(5-phospho-1-deoxy-D-ribulos-1-ylimino)methylamino]-1-(5-phospho-beta-D-ribosyl)imidazole-4-carboxamide. It participates in amino-acid biosynthesis; L-histidine biosynthesis; L-histidine from 5-phospho-alpha-D-ribose 1-diphosphate: step 4/9. This chain is 1-(5-phosphoribosyl)-5-[(5-phosphoribosylamino)methylideneamino] imidazole-4-carboxamide isomerase, found in Geobacillus kaustophilus (strain HTA426).